The chain runs to 316 residues: UDP-N-acetylenolpyruvoylglucosamine reductase (316 aa).

Residues 27–225 (VGGKAERFYR…KTAINALLKK (199 aa)) enclose the FAD-binding PCMH-type domain. Residue Arg190 is part of the active site. The active-site Proton donor is Ser239. Residue Glu309 is part of the active site.

This sequence belongs to the MurB family. The cofactor is FAD.

Its subcellular location is the cytoplasm. The catalysed reaction is UDP-N-acetyl-alpha-D-muramate + NADP(+) = UDP-N-acetyl-3-O-(1-carboxyvinyl)-alpha-D-glucosamine + NADPH + H(+). Its pathway is cell wall biogenesis; peptidoglycan biosynthesis. In terms of biological role, cell wall formation. The polypeptide is UDP-N-acetylenolpyruvoylglucosamine reductase (Coxiella burnetii (strain Dugway 5J108-111)).